The sequence spans 401 residues: Na(+)/H(+) antiporter NhaA 2 (401 aa).

11 helical membrane-spanning segments follow: residues 13–33 (AAGG…ANSP), 59–79 (LLLW…GLEV), 94–114 (ITLP…IYVW), 125–145 (GWAI…TIFG), 154–174 (LFLL…IALF), 178–198 (DLST…FLLN), 209–229 (VLIG…ATLA), 260–280 (WVGF…SLFG), 292–312 (LGIA…VCWI), 332–352 (GVSL…SLAF), and 363–383 (VKAG…VLLA).

It belongs to the NhaA Na(+)/H(+) (TC 2.A.33) antiporter family.

The protein localises to the cell inner membrane. It carries out the reaction Na(+)(in) + 2 H(+)(out) = Na(+)(out) + 2 H(+)(in). Its function is as follows. Na(+)/H(+) antiporter that extrudes sodium in exchange for external protons. This chain is Na(+)/H(+) antiporter NhaA 2, found in Pseudoalteromonas atlantica (strain T6c / ATCC BAA-1087).